Reading from the N-terminus, the 88-residue chain is SPbeta prophage-derived protein BhlB (88 aa).

2 helical membrane-spanning segments follow: residues 15 to 35 (LLAI…AFII) and 45 to 65 (DCLY…AAWF).

Belongs to the SPP1 holin family.

It is found in the cell membrane. In terms of biological role, may be involved in the secretion of the autolysin BlyA. The chain is SPbeta prophage-derived protein BhlB (bhlB) from Bacillus subtilis (strain 168).